Here is a 202-residue protein sequence, read N- to C-terminus: MLKFLKQVGDYAKESLQAAKAIGQGLGVTFDHMQRRPVTVQYPYEKLIPSERYRGRIHYEFDKCIACEVCVRVCPINLPVVDWVYNKETKKKDLKNYSIDFGACIFCGNCVEYCPTNCLSMTEEYELATYDRHELNYDNVALGRLPYKVTDDPMVTPFREFAYLPKGEYDPHVVPSDRPRAGQRPEELVDQYKQAAAANEEN.

4Fe-4S ferredoxin-type domains lie at 55-84 (GRIH…VDWV) and 95-124 (KNYS…MTEE). Residues C64, C67, C70, C74, C104, C107, C110, and C114 each coordinate [4Fe-4S] cluster. Basic and acidic residues predominate over residues 168-187 (EYDPHVVPSDRPRAGQRPEE). The segment at 168–202 (EYDPHVVPSDRPRAGQRPEELVDQYKQAAAANEEN) is disordered.

Belongs to the complex I 23 kDa subunit family. In terms of assembly, NDH-1 is composed of at least 11 different subunits. The cofactor is [4Fe-4S] cluster.

The protein localises to the cellular thylakoid membrane. It catalyses the reaction a plastoquinone + NADH + (n+1) H(+)(in) = a plastoquinol + NAD(+) + n H(+)(out). It carries out the reaction a plastoquinone + NADPH + (n+1) H(+)(in) = a plastoquinol + NADP(+) + n H(+)(out). In terms of biological role, NDH-1 shuttles electrons from an unknown electron donor, via FMN and iron-sulfur (Fe-S) centers, to quinones in the respiratory and/or the photosynthetic chain. The immediate electron acceptor for the enzyme in this species is believed to be plastoquinone. Couples the redox reaction to proton translocation, and thus conserves the redox energy in a proton gradient. The protein is NAD(P)H-quinone oxidoreductase subunit I of Synechococcus elongatus (strain ATCC 33912 / PCC 7942 / FACHB-805) (Anacystis nidulans R2).